The chain runs to 252 residues: Phosphomannomutase (252 aa).

Aspartate 13 acts as the Nucleophile in catalysis. The Mg(2+) site is built by aspartate 13 and aspartate 15. Aspartate 15 (proton donor/acceptor) is an active-site residue. 6 residues coordinate alpha-D-mannose 1-phosphate: arginine 22, arginine 124, arginine 135, arginine 142, serine 180, and aspartate 182. Mg(2+)-binding residues include aspartate 208, tyrosine 220, and threonine 225.

The protein belongs to the eukaryotic PMM family. Homodimer. The cofactor is Mg(2+).

The protein localises to the cytoplasm. The enzyme catalyses alpha-D-mannose 1-phosphate = D-mannose 6-phosphate. Its pathway is nucleotide-sugar biosynthesis; GDP-alpha-D-mannose biosynthesis; alpha-D-mannose 1-phosphate from D-fructose 6-phosphate: step 2/2. In terms of biological role, catalyzes the interconversion of mannose-6-phosphate to mannose-1-phosphate, the precursor for the synthesis of GDP-mannose. GDP-mannose is an essential sugar nucleotide for the synthesis of D-mannose-containing cell wall polysaccharides (galactomannans and glucomannans), glycolipids, glycoproteins and the antioxidant L-ascorbate. Can complement the yeast temperature-sensitive mutant sec53-6. The polypeptide is Phosphomannomutase (Solanum lycopersicum (Tomato)).